The sequence spans 318 residues: 4-hydroxy-3-methylbut-2-enyl diphosphate reductase (318 aa).

Cysteine 12 is a [4Fe-4S] cluster binding site. Residues histidine 41 and histidine 74 each contribute to the (2E)-4-hydroxy-3-methylbut-2-enyl diphosphate site. Dimethylallyl diphosphate contacts are provided by histidine 41 and histidine 74. Isopentenyl diphosphate contacts are provided by histidine 41 and histidine 74. Cysteine 96 contacts [4Fe-4S] cluster. (2E)-4-hydroxy-3-methylbut-2-enyl diphosphate is bound at residue histidine 124. Histidine 124 contacts dimethylallyl diphosphate. Isopentenyl diphosphate is bound at residue histidine 124. The Proton donor role is filled by glutamate 126. A (2E)-4-hydroxy-3-methylbut-2-enyl diphosphate-binding site is contributed by threonine 168. Cysteine 198 is a binding site for [4Fe-4S] cluster. Residues serine 226, serine 227, asparagine 228, and serine 270 each coordinate (2E)-4-hydroxy-3-methylbut-2-enyl diphosphate. Dimethylallyl diphosphate-binding residues include serine 226, serine 227, asparagine 228, and serine 270. Residues serine 226, serine 227, asparagine 228, and serine 270 each coordinate isopentenyl diphosphate.

The protein belongs to the IspH family. Requires [4Fe-4S] cluster as cofactor.

It catalyses the reaction isopentenyl diphosphate + 2 oxidized [2Fe-2S]-[ferredoxin] + H2O = (2E)-4-hydroxy-3-methylbut-2-enyl diphosphate + 2 reduced [2Fe-2S]-[ferredoxin] + 2 H(+). It carries out the reaction dimethylallyl diphosphate + 2 oxidized [2Fe-2S]-[ferredoxin] + H2O = (2E)-4-hydroxy-3-methylbut-2-enyl diphosphate + 2 reduced [2Fe-2S]-[ferredoxin] + 2 H(+). It functions in the pathway isoprenoid biosynthesis; dimethylallyl diphosphate biosynthesis; dimethylallyl diphosphate from (2E)-4-hydroxy-3-methylbutenyl diphosphate: step 1/1. Its pathway is isoprenoid biosynthesis; isopentenyl diphosphate biosynthesis via DXP pathway; isopentenyl diphosphate from 1-deoxy-D-xylulose 5-phosphate: step 6/6. Catalyzes the conversion of 1-hydroxy-2-methyl-2-(E)-butenyl 4-diphosphate (HMBPP) into a mixture of isopentenyl diphosphate (IPP) and dimethylallyl diphosphate (DMAPP). Acts in the terminal step of the DOXP/MEP pathway for isoprenoid precursor biosynthesis. The protein is 4-hydroxy-3-methylbut-2-enyl diphosphate reductase of Psychrobacter arcticus (strain DSM 17307 / VKM B-2377 / 273-4).